Consider the following 739-residue polypeptide: uncharacterized protein (739 aa).

A run of 8 helical transmembrane segments spans residues 53–73 (LALGIALWMELGSPQWAALTV), 90–110 (WHLFGMVVGVISGITLVAAIP), 114–134 (LMFILLLAVGIGTFCMIGTFM), 178–198 (TYILLGIVLEASISGLFQLGL), 421–441 (LIWICTAWPSGLTFIMFVCIV), 457–477 (AFLRGACCAVVAAGILNLALM), 491–511 (GLAMMIGGLAFAYPPLTLPAV), and 532–552 (IVYFNTALPLVLGLLYASWMY).

Belongs to the aromatic acid exporter ArAE (TC 2.A.85) family.

The protein localises to the cell membrane. This is an uncharacterized protein from Gluconobacter oxydans (strain 621H) (Gluconobacter suboxydans).